The primary structure comprises 710 residues: Lactoperoxidase (710 aa).

The signal sequence occupies residues 1–22 (MKVLLRLPALLASLTLLQMAAS). Positions 23 to 98 (TRNATRTATI…WEQSLKRLRR (76 aa)) are excised as a propeptide. 3 N-linked (GlcNAc...) asparagine glycosylation sites follow: asparagine 25, asparagine 104, and asparagine 131. Cysteine 130 and cysteine 143 are joined by a disulfide. Aspartate 223 serves as a coordination point for heme b. Histidine 224 functions as the Proton acceptor in the catalytic mechanism. Position 225 (aspartate 225) interacts with Ca(2+). N-linked (GlcNAc...) asparagine glycosylation occurs at asparagine 238. 2 disulfides stabilise this stretch: cysteine 244-cysteine 254 and cysteine 248-cysteine 272. Positions 299, 301, 303, and 305 each coordinate Ca(2+). Serine 313 carries the phosphoserine modification. Asparagine 320 carries an N-linked (GlcNAc...) asparagine glycan. Cysteine 352 and cysteine 363 are oxidised to a cystine. Heme b contacts are provided by glutamate 373 and histidine 466. 3'-nitrotyrosine is present on tyrosine 480. Disulfide bonds link cysteine 571-cysteine 628 and cysteine 669-cysteine 694.

This sequence belongs to the peroxidase family. XPO subfamily. The cofactor is Ca(2+). It depends on heme b as a cofactor. Expressed in the lacrimal gland with higher levels and 3-fold higher activity in adult females than males and secreted into tears (at protein level).

It is found in the secreted. It localises to the cytoplasm. It carries out the reaction 2 a phenolic donor + H2O2 = 2 a phenolic radical donor + 2 H2O. The catalysed reaction is thiocyanate + H2O2 + H(+) = hypothiocyanous acid + H2O. It catalyses the reaction iodide + H2O2 = hypoiodite + H2O. In terms of biological role, heme-containing oxidoreductase which catalyzes the conversion of thiocyanate (SCN(-)) into antimicrobial agent hypothiocyanous acid (OSCN(-)) in the presence of hydrogen peroxide (H2O2). Also involved in the conversion of iodide (I(-)) into hypoiodite (IO(-)) in the presence of H2O2. Responsible for the inactivation of a wide range of micro-organisms and hence, important component of defense mechanism. May be implicated in airway host defense against infection. May contribute to maintaining an appropriate H2O2 cellular level, therefore protecting cells from H2O2-caused injuries and inflammation. The chain is Lactoperoxidase (LPO) from Mesocricetus auratus (Golden hamster).